The chain runs to 839 residues: NT-3 growth factor receptor (839 aa).

An N-terminal signal peptide occupies residues Met1 to Ala31. 2 disulfide bridges follow: Cys32–Cys38 and Cys36–Cys45. Over Cys32–Thr429 the chain is Extracellular. Asn72 and Asn79 each carry an N-linked (GlcNAc...) asparagine glycan. 2 LRR repeats span residues Gly104–Lys125 and His128–Thr149. Residues Asn133 and Asn163 are each glycosylated (N-linked (GlcNAc...) asparagine). In terms of domain architecture, LRRCT spans Asn160–Leu209. Disulfide bonds link Cys164-Cys189 and Cys166-Cys207. Residues Asn203, Asn218, Asn232, Asn259, Asn267, Asn272, and Asn294 are each glycosylated (N-linked (GlcNAc...) asparagine). Ig-like C2-type domains follow at residues Pro210–Thr300 and Ser309–Asn382. A disulfide bond links Cys231 and Cys284. Cys320 and Cys362 are disulfide-bonded. N-linked (GlcNAc...) asparagine glycans are attached at residues Asn375 and Asn388. The helical transmembrane segment at Phe430 to Ile453 threads the bilayer. At Asn454 to Gly839 the chain is on the cytoplasmic side. Ser493 bears the Phosphoserine mark. Position 516 is a phosphotyrosine; by autocatalysis (Tyr516). One can recognise a Protein kinase domain in the interval Ile538 to Gly839. ATP is bound by residues Leu544–Val552 and Lys572. The active-site Proton acceptor is Asp679. Tyr705, Tyr709, and Tyr710 each carry phosphotyrosine; by autocatalysis.

The protein belongs to the protein kinase superfamily. Tyr protein kinase family. Insulin receptor subfamily. In terms of assembly, exists in a dynamic equilibrium between monomeric (low affinity) and dimeric (high affinity) structures. Binds SH2B2. Interacts with SQSTM1 and KIDINS220. Interacts with PTPRS. Interacts with MAPK8IP3/JIP3. In terms of processing, ligand-mediated auto-phosphorylation. As to expression, widely expressed but mainly in nervous tissue. Isoform 2 is expressed at higher levels in adult brain than in fetal brain.

It is found in the membrane. It catalyses the reaction L-tyrosyl-[protein] + ATP = O-phospho-L-tyrosyl-[protein] + ADP + H(+). Receptor tyrosine kinase involved in nervous system and probably heart development. Upon binding of its ligand NTF3/neurotrophin-3, NTRK3 autophosphorylates and activates different signaling pathways, including the phosphatidylinositol 3-kinase/AKT and the MAPK pathways, that control cell survival and differentiation. In Homo sapiens (Human), this protein is NT-3 growth factor receptor (NTRK3).